A 393-amino-acid chain; its full sequence is Phosphoglycerate kinase (393 aa).

Residues 21 to 23 (DLN), arginine 37, 60 to 63 (HLGR), arginine 115, and arginine 148 contribute to the substrate site. ATP is bound by residues lysine 199, glutamate 321, and 347–350 (GGDT).

It belongs to the phosphoglycerate kinase family. In terms of assembly, monomer.

The protein localises to the cytoplasm. It carries out the reaction (2R)-3-phosphoglycerate + ATP = (2R)-3-phospho-glyceroyl phosphate + ADP. The protein operates within carbohydrate degradation; glycolysis; pyruvate from D-glyceraldehyde 3-phosphate: step 2/5. The chain is Phosphoglycerate kinase from Dechloromonas aromatica (strain RCB).